A 95-amino-acid chain; its full sequence is Small ribosomal subunit protein bS6 (95 aa).

Belongs to the bacterial ribosomal protein bS6 family.

In terms of biological role, binds together with bS18 to 16S ribosomal RNA. The sequence is that of Small ribosomal subunit protein bS6 from Exiguobacterium sp. (strain ATCC BAA-1283 / AT1b).